The chain runs to 129 residues: uncharacterized protein (129 aa).

Positions 85–108 (SSAADSDDSSSCSECDSDALLSDD) are enriched in low complexity. The interval 85–110 (SSAADSDDSSSCSECDSDALLSDDGP) is disordered.

This is an uncharacterized protein from Microplitis demolitor (Parasitoid wasp).